An 89-amino-acid polypeptide reads, in one-letter code: MARSLKKGPFVDHHLVKKVEAAAGSKKPIKTWSRRSMILPDMVGVTIAVHNGKNHIPVLVNENMVGHKLGEFAITRTFKGHGGDKKSGK.

The protein belongs to the universal ribosomal protein uS19 family.

Protein S19 forms a complex with S13 that binds strongly to the 16S ribosomal RNA. The polypeptide is Small ribosomal subunit protein uS19 (Stenotrophomonas maltophilia (strain K279a)).